The following is a 229-amino-acid chain: Ribonuclease 3 (229 aa).

The RNase III domain maps to 4–133 (WEELQESVGF…FIGALYLDNG (130 aa)). Residue E46 participates in Mg(2+) binding. D50 is a catalytic residue. Residues D119 and E122 each coordinate Mg(2+). E122 is a catalytic residue. The 70-residue stretch at 159–228 (DYKTQLQEIV…AQFAINQLTH (70 aa)) folds into the DRBM domain.

Belongs to the ribonuclease III family. Homodimer. It depends on Mg(2+) as a cofactor.

It is found in the cytoplasm. The catalysed reaction is Endonucleolytic cleavage to 5'-phosphomonoester.. Its function is as follows. Digests double-stranded RNA. Involved in the processing of primary rRNA transcript to yield the immediate precursors to the large and small rRNAs (23S and 16S). Processes some mRNAs, and tRNAs when they are encoded in the rRNA operon. Processes pre-crRNA and tracrRNA of type II CRISPR loci if present in the organism. This chain is Ribonuclease 3, found in Listeria monocytogenes serotype 4b (strain CLIP80459).